Here is a 105-residue protein sequence, read N- to C-terminus: Thioredoxin-like protein slr0233 (105 aa).

Residues 1–102 (MAVKKQFANF…QAAQLIQQLQ (102 aa)) enclose the Thioredoxin domain. The cysteines at positions 30 and 33 are disulfide-linked.

Belongs to the thioredoxin family.

This is Thioredoxin-like protein slr0233 from Synechocystis sp. (strain ATCC 27184 / PCC 6803 / Kazusa).